A 375-amino-acid chain; its full sequence is Deoxyhypusine synthase-like protein (375 aa).

Belongs to the deoxyhypusine synthase family.

This is Deoxyhypusine synthase-like protein from Elusimicrobium minutum (strain Pei191).